We begin with the raw amino-acid sequence, 288 residues long: MAVGKEIRSKIKSVQSTQKITRAMQMVATSKMRKTQERMRSARPYAEKIREVMAHVAETNPDFKHPALERRDVVKRVGVILVTTDKGLCGGLNANALRTFYQYAERWAEQGIEVDVCCFGQKGYAALTRLDMKVVSSATQLGDTPQQEKLLGPASHIVRAYLDGEIDELHIVYSKFLNTMKQEPRVEQLLPLKTEELESEFPYSWDYLYEPDVRGVLDVLVRRYLESVVYQAVSENMASEQSARMVAMKAATDNAAQAIERLKLTYNKARQAAITTELSEICAGAAAV.

It belongs to the ATPase gamma chain family. F-type ATPases have 2 components, CF(1) - the catalytic core - and CF(0) - the membrane proton channel. CF(1) has five subunits: alpha(3), beta(3), gamma(1), delta(1), epsilon(1). CF(0) has three main subunits: a, b and c.

It is found in the cell inner membrane. Its function is as follows. Produces ATP from ADP in the presence of a proton gradient across the membrane. The gamma chain is believed to be important in regulating ATPase activity and the flow of protons through the CF(0) complex. The polypeptide is ATP synthase gamma chain (Laribacter hongkongensis (strain HLHK9)).